We begin with the raw amino-acid sequence, 255 residues long: MASPREENVYMANVADEAERYEEMVEFMEKVVAALNGEELTVEERNLLSVAYKNVIGARRASWRIISSIEQKEESRGNEDHVASIKKYRSQIENELTSICNGILKLLDSKLIGSAATGDSKVFYLKMKGDYYRYLAEFKTGTERKEAAENTLSAYKSAQDIANGELAPTHPIRLGLALNFSVFYYEILNSPDRACNLAKQAFDEAIAELDTLGEESYKDSTLIMQLLRDNLTLWTSDMQDDGTDEIKEPSKADNE.

This sequence belongs to the 14-3-3 family. In terms of assembly, homodimer.

The polypeptide is 14-3-3 protein 5 (TFT5) (Solanum lycopersicum (Tomato)).